We begin with the raw amino-acid sequence, 417 residues long: UDP-N-acetylglucosamine 1-carboxyvinyltransferase (417 aa).

22–23 contributes to the phosphoenolpyruvate binding site; the sequence is KN. A UDP-N-acetyl-alpha-D-glucosamine-binding site is contributed by R93. C117 acts as the Proton donor in catalysis. C117 is modified (2-(S-cysteinyl)pyruvic acid O-phosphothioketal). Residues 122 to 126, D304, and I326 each bind UDP-N-acetyl-alpha-D-glucosamine; that span reads RPVDQ.

The protein belongs to the EPSP synthase family. MurA subfamily.

Its subcellular location is the cytoplasm. It carries out the reaction phosphoenolpyruvate + UDP-N-acetyl-alpha-D-glucosamine = UDP-N-acetyl-3-O-(1-carboxyvinyl)-alpha-D-glucosamine + phosphate. It functions in the pathway cell wall biogenesis; peptidoglycan biosynthesis. Functionally, cell wall formation. Adds enolpyruvyl to UDP-N-acetylglucosamine. This chain is UDP-N-acetylglucosamine 1-carboxyvinyltransferase, found in Laribacter hongkongensis (strain HLHK9).